The following is a 68-amino-acid chain: Purkinje cell protein 4-like protein 1 (68 aa).

Polar residues predominate over residues 1–16; that stretch reads MSELNTKTSPATNQAA. A disordered region spans residues 1-45; the sequence is MSELNTKTSPATNQAAGQEEKGKAGNVKKAEEEEEIDIDLTAPET. Thr-8 bears the Phosphothreonine mark. Residues 18–31 show a composition bias toward basic and acidic residues; sequence QEEKGKAGNVKKAE. The IQ domain maps to 45 to 68; sequence TEKAALAIQGKFRRFQKRKKDPSS.

The protein belongs to the PCP4 family.

The protein is Purkinje cell protein 4-like protein 1 (PCP4L1) of Homo sapiens (Human).